Reading from the N-terminus, the 492-residue chain is 2-succinylbenzoate--CoA ligase (492 aa).

Belongs to the ATP-dependent AMP-binding enzyme family. MenE subfamily.

The enzyme catalyses 2-succinylbenzoate + ATP + CoA = 2-succinylbenzoyl-CoA + AMP + diphosphate. Its pathway is quinol/quinone metabolism; 1,4-dihydroxy-2-naphthoate biosynthesis; 1,4-dihydroxy-2-naphthoate from chorismate: step 5/7. It participates in quinol/quinone metabolism; menaquinone biosynthesis. Its function is as follows. Converts 2-succinylbenzoate (OSB) to 2-succinylbenzoyl-CoA (OSB-CoA). This chain is 2-succinylbenzoate--CoA ligase, found in Staphylococcus aureus (strain Mu3 / ATCC 700698).